The sequence spans 147 residues: Small ribosomal subunit protein uS9 (147 aa).

It belongs to the universal ribosomal protein uS9 family.

This Dictyostelium discoideum (Social amoeba) protein is Small ribosomal subunit protein uS9 (rps16).